The primary structure comprises 903 residues: Protein translocase subunit SecA (903 aa).

ATP contacts are provided by residues glutamine 87, 105–109 (GEGKT), and aspartate 512. Positions 887, 889, 898, and 899 each coordinate Zn(2+).

This sequence belongs to the SecA family. As to quaternary structure, monomer and homodimer. Part of the essential Sec protein translocation apparatus which comprises SecA, SecYEG and auxiliary proteins SecDF-YajC and YidC. It depends on Zn(2+) as a cofactor.

The protein resides in the cell inner membrane. The protein localises to the cytoplasm. It catalyses the reaction ATP + H2O + cellular proteinSide 1 = ADP + phosphate + cellular proteinSide 2.. In terms of biological role, part of the Sec protein translocase complex. Interacts with the SecYEG preprotein conducting channel. Has a central role in coupling the hydrolysis of ATP to the transfer of proteins into and across the cell membrane, serving both as a receptor for the preprotein-SecB complex and as an ATP-driven molecular motor driving the stepwise translocation of polypeptide chains across the membrane. The sequence is that of Protein translocase subunit SecA from Photorhabdus laumondii subsp. laumondii (strain DSM 15139 / CIP 105565 / TT01) (Photorhabdus luminescens subsp. laumondii).